Consider the following 424-residue polypeptide: 3-isopropylmalate dehydratase large subunit 1 (424 aa).

3 residues coordinate [4Fe-4S] cluster: C303, C363, and C366.

Belongs to the aconitase/IPM isomerase family. LeuC type 2 subfamily. In terms of assembly, heterodimer of LeuC and LeuD. [4Fe-4S] cluster serves as cofactor.

The enzyme catalyses (2R,3S)-3-isopropylmalate = (2S)-2-isopropylmalate. It participates in amino-acid biosynthesis; L-leucine biosynthesis; L-leucine from 3-methyl-2-oxobutanoate: step 2/4. Catalyzes the isomerization between 2-isopropylmalate and 3-isopropylmalate, via the formation of 2-isopropylmaleate. The protein is 3-isopropylmalate dehydratase large subunit 1 of Pyrococcus furiosus (strain ATCC 43587 / DSM 3638 / JCM 8422 / Vc1).